The primary structure comprises 113 residues: MSASVVSVISRFLEEYLSSTPQRLKLLDAYLLYILLTGALQFGYCLLVGTFPFNSFLSGFISCVGSFILAVCLRIQINPQNKADFQGISPERAFADFLFASTILHLVVMNFVG.

Serine 2 is modified (N-acetylserine). Over 2-30 (SASVVSVISRFLEEYLSSTPQRLKLLDAY) the chain is Cytoplasmic. Residues 31-51 (LLYILLTGALQFGYCLLVGTF) form a helical membrane-spanning segment. Proline 52 is a topological domain (lumenal). A helical membrane pass occupies residues 53–73 (FNSFLSGFISCVGSFILAVCL). Over 74-92 (RIQINPQNKADFQGISPER) the chain is Cytoplasmic. A helical membrane pass occupies residues 93 to 113 (AFADFLFASTILHLVVMNFVG).

This sequence belongs to the DAD/OST2 family. Component of the oligosaccharyltransferase (OST) complex. OST exists in two different complex forms which contain common core subunits RPN1, RPN2, OST48, OST4, DAD1 and TMEM258, either STT3A or STT3B as catalytic subunits, and form-specific accessory subunits. STT3A complex assembly occurs through the formation of 3 subcomplexes. Subcomplex 1 contains RPN1 and TMEM258, subcomplex 2 contains the STT3A-specific subunits STT3A, DC2/OSTC, and KCP2 as well as the core subunit OST4, and subcomplex 3 contains RPN2, DAD1, and OST48. The STT3A complex can form stable complexes with the Sec61 complex or with both the Sec61 and TRAP complexes.

The protein resides in the endoplasmic reticulum membrane. It participates in protein modification; protein glycosylation. Its function is as follows. Subunit of the oligosaccharyl transferase (OST) complex that catalyzes the initial transfer of a defined glycan (Glc(3)Man(9)GlcNAc(2) in eukaryotes) from the lipid carrier dolichol-pyrophosphate to an asparagine residue within an Asn-X-Ser/Thr consensus motif in nascent polypeptide chains, the first step in protein N-glycosylation. N-glycosylation occurs cotranslationally and the complex associates with the Sec61 complex at the channel-forming translocon complex that mediates protein translocation across the endoplasmic reticulum (ER). All subunits are required for a maximal enzyme activity. The sequence is that of Dolichyl-diphosphooligosaccharide--protein glycosyltransferase subunit DAD1 from Mus musculus (Mouse).